The following is a 188-amino-acid chain: RNA 2',3'-cyclic phosphodiesterase (188 aa).

The active-site Proton donor is H42. Short sequence motifs (HXTX) lie at residues 42–45 (HMTL) and 130–133 (HVTI). The active-site Proton acceptor is H130.

Belongs to the 2H phosphoesterase superfamily. ThpR family.

The catalysed reaction is a 3'-end 2',3'-cyclophospho-ribonucleotide-RNA + H2O = a 3'-end 2'-phospho-ribonucleotide-RNA + H(+). Functionally, hydrolyzes RNA 2',3'-cyclic phosphodiester to an RNA 2'-phosphomonoester. The protein is RNA 2',3'-cyclic phosphodiesterase of Aquifex aeolicus (strain VF5).